The sequence spans 245 residues: Eukaryotic translation initiation factor 3 subunit K (245 aa).

One can recognise a PCI domain in the interval 46–227 (YDCYANLALL…EAKGTVVREN (182 aa)).

Belongs to the eIF-3 subunit K family. In terms of assembly, component of the eukaryotic translation initiation factor 3 (eIF-3) complex.

The protein localises to the cytoplasm. Component of the eukaryotic translation initiation factor 3 (eIF-3) complex, which is involved in protein synthesis of a specialized repertoire of mRNAs and, together with other initiation factors, stimulates binding of mRNA and methionyl-tRNAi to the 40S ribosome. The eIF-3 complex specifically targets and initiates translation of a subset of mRNAs involved in cell proliferation. This chain is Eukaryotic translation initiation factor 3 subunit K, found in Botryotinia fuckeliana (strain B05.10) (Noble rot fungus).